The following is a 412-amino-acid chain: Multifunctional CCA protein (412 aa).

Residues Gly8 and Arg11 each coordinate ATP. Gly8 and Arg11 together coordinate CTP. Mg(2+) contacts are provided by Glu21 and Asp23. Residues Arg91, Arg137, and Arg140 each contribute to the ATP site. The CTP site is built by Arg91, Arg137, and Arg140. One can recognise an HD domain in the interval 228–329; the sequence is CGIHTLMSLQ…WRLLQRLDVL (102 aa).

The protein belongs to the tRNA nucleotidyltransferase/poly(A) polymerase family. Bacterial CCA-adding enzyme type 1 subfamily. Monomer. Can also form homodimers and oligomers. The cofactor is Mg(2+). Ni(2+) is required as a cofactor.

It carries out the reaction a tRNA precursor + 2 CTP + ATP = a tRNA with a 3' CCA end + 3 diphosphate. The enzyme catalyses a tRNA with a 3' CCA end + 2 CTP + ATP = a tRNA with a 3' CCACCA end + 3 diphosphate. Its function is as follows. Catalyzes the addition and repair of the essential 3'-terminal CCA sequence in tRNAs without using a nucleic acid template. Adds these three nucleotides in the order of C, C, and A to the tRNA nucleotide-73, using CTP and ATP as substrates and producing inorganic pyrophosphate. tRNA 3'-terminal CCA addition is required both for tRNA processing and repair. Also involved in tRNA surveillance by mediating tandem CCA addition to generate a CCACCA at the 3' terminus of unstable tRNAs. While stable tRNAs receive only 3'-terminal CCA, unstable tRNAs are marked with CCACCA and rapidly degraded. This is Multifunctional CCA protein from Acinetobacter baumannii (strain AB307-0294).